The chain runs to 158 residues: Ribosome maturation factor RimP (158 aa).

This sequence belongs to the RimP family.

Its subcellular location is the cytoplasm. Functionally, required for maturation of 30S ribosomal subunits. The protein is Ribosome maturation factor RimP of Aquifex aeolicus (strain VF5).